Reading from the N-terminus, the 861-residue chain is Probable linoleate 9S-lipoxygenase 7 (861 aa).

In terms of domain architecture, PLAT spans 29–160 (NVLDFTDLAG…NYKSDRIFFA (132 aa)). The region spanning 163–861 (PYLPSETPEL…GKGIPNSVSI (699 aa)) is the Lipoxygenase domain. Residues 220–246 (TLGGSAEYPYPRRGRTGRPPTRTDPKS) are disordered. Positions 522, 527, 713, 717, and 861 each coordinate Fe cation.

This sequence belongs to the lipoxygenase family. Monomer. Fe cation serves as cofactor. Expressed in tubers. Detected in sprouts and flowers. but not in leaves or stems.

It localises to the cytoplasm. It catalyses the reaction (9Z,12Z)-octadecadienoate + O2 = (9S)-hydroperoxy-(10E,12Z)-octadecadienoate. The protein operates within lipid metabolism; oxylipin biosynthesis. In terms of biological role, plant lipoxygenases may be involved in a number of diverse aspects of plant physiology including growth and development, pest resistance, and senescence or responses to wounding. Catalyzes the hydroperoxidation of lipids containing a cis,cis-1,4-pentadiene structure. This Solanum tuberosum (Potato) protein is Probable linoleate 9S-lipoxygenase 7 (LOX1.7).